The chain runs to 125 residues: Phosphoribosyl-AMP cyclohydrolase (125 aa).

D74 contacts Mg(2+). A Zn(2+)-binding site is contributed by C75. Residues D76 and D78 each coordinate Mg(2+). C92 and C99 together coordinate Zn(2+).

This sequence belongs to the PRA-CH family. Homodimer. Requires Mg(2+) as cofactor. It depends on Zn(2+) as a cofactor.

It localises to the cytoplasm. It catalyses the reaction 1-(5-phospho-beta-D-ribosyl)-5'-AMP + H2O = 1-(5-phospho-beta-D-ribosyl)-5-[(5-phospho-beta-D-ribosylamino)methylideneamino]imidazole-4-carboxamide. The protein operates within amino-acid biosynthesis; L-histidine biosynthesis; L-histidine from 5-phospho-alpha-D-ribose 1-diphosphate: step 3/9. Functionally, catalyzes the hydrolysis of the adenine ring of phosphoribosyl-AMP. The sequence is that of Phosphoribosyl-AMP cyclohydrolase from Desulforapulum autotrophicum (strain ATCC 43914 / DSM 3382 / VKM B-1955 / HRM2) (Desulfobacterium autotrophicum).